Reading from the N-terminus, the 280-residue chain is Acetylglutamate kinase (280 aa).

Substrate-binding positions include 64 to 65 (GG), Arg-86, and Asn-179.

The protein belongs to the acetylglutamate kinase family. ArgB subfamily.

The protein localises to the cytoplasm. It carries out the reaction N-acetyl-L-glutamate + ATP = N-acetyl-L-glutamyl 5-phosphate + ADP. It functions in the pathway amino-acid biosynthesis; L-arginine biosynthesis; N(2)-acetyl-L-ornithine from L-glutamate: step 2/4. Catalyzes the ATP-dependent phosphorylation of N-acetyl-L-glutamate. This is Acetylglutamate kinase from Campylobacter fetus subsp. fetus (strain 82-40).